Reading from the N-terminus, the 281-residue chain is Penicillin-insensitive murein endopeptidase (281 aa).

A signal peptide spans 1-24 (MKQGLIGVLALALGATLLSSAVWA). Disulfide bonds link C49–C270, C192–C240, and C221–C228. Residues H115, H118, D125, and H216 each coordinate Zn(2+). Residues 230–271 (EQSEPPIGDGCGAELTSWFQPKQPSSEAPEKTTPPPLPPSCQ) form a disordered region. Polar residues predominate over residues 246 to 255 (SWFQPKQPSS).

This sequence belongs to the peptidase M74 family. As to quaternary structure, dimer. Requires Zn(2+) as cofactor.

It is found in the periplasm. Murein endopeptidase that cleaves the D-alanyl-meso-2,6-diamino-pimelyl amide bond that connects peptidoglycan strands. Likely plays a role in the removal of murein from the sacculus. The protein is Penicillin-insensitive murein endopeptidase (mepA) of Pectobacterium atrosepticum (strain SCRI 1043 / ATCC BAA-672) (Erwinia carotovora subsp. atroseptica).